The sequence spans 503 residues: Mitogen-activated protein kinase kinae mkk2 (503 aa).

Residues 1 to 130 form a disordered region; sequence MSSSPVPLLR…ASGPASASSS (130 aa). Pro residues predominate over residues 53–66; the sequence is APQPQRPSTRPAPP. Residues 100-115 are compositionally biased toward polar residues; it reads TGLNESTGHSRSSSFT. A compositionally biased stretch (low complexity) spans 121 to 130; the sequence is ASGPASASSS. A Protein kinase domain is found at 211–481; sequence IIELGSLGEG…PWRMLEHPWM (271 aa). Residues 217–225 and Lys240 contribute to the ATP site; that span reads LGEGAGGAV. The active-site Proton acceptor is the Asp338.

This sequence belongs to the protein kinase superfamily. STE Ser/Thr protein kinase family. MAP kinase kinase subfamily.

The catalysed reaction is L-seryl-[protein] + ATP = O-phospho-L-seryl-[protein] + ADP + H(+). It catalyses the reaction L-threonyl-[protein] + ATP = O-phospho-L-threonyl-[protein] + ADP + H(+). Mitogen-activated kinase kinase (MAPKK), part of the cell wall integrity (CWI) signaling pathway composed by three protein kinases bck1, mkk2 and mpkA and responsible for the maintaining of cell-wall integrity balance. The CWI pathway also regulates the oxidative stress response, as well as the production of some secondary metabolites including pyomelanin. This chain is Mitogen-activated protein kinase kinae mkk2, found in Aspergillus fumigatus (strain CBS 144.89 / FGSC A1163 / CEA10) (Neosartorya fumigata).